The chain runs to 703 residues: Polyribonucleotide nucleotidyltransferase (703 aa).

The Mg(2+) site is built by Asp-489 and Asp-495. The KH domain maps to 556–615 (PTMIAMKIDTDKIRDVIGKGGATIRAICEETKASIDIEDDGSIKIFGETKEAAEAARQRV). Positions 625–693 (GKIYVGKVER…NRGRIKLSIK (69 aa)) constitute an S1 motif domain.

Belongs to the polyribonucleotide nucleotidyltransferase family. Component of the RNA degradosome, which is a multiprotein complex involved in RNA processing and mRNA degradation. It depends on Mg(2+) as a cofactor.

The protein localises to the cytoplasm. The enzyme catalyses RNA(n+1) + phosphate = RNA(n) + a ribonucleoside 5'-diphosphate. Functionally, involved in mRNA degradation. Catalyzes the phosphorolysis of single-stranded polyribonucleotides processively in the 3'- to 5'-direction. In Pseudomonas fluorescens (strain ATCC BAA-477 / NRRL B-23932 / Pf-5), this protein is Polyribonucleotide nucleotidyltransferase.